We begin with the raw amino-acid sequence, 768 residues long: Cullin-3-A (768 aa).

The disordered stretch occupies residues 677–698; the sequence is VAAKQGESDPERKETRQKVDDD. Over residues 682-698 the composition is skewed to basic and acidic residues; sequence GESDPERKETRQKVDDD. A Cullin neddylation domain is found at 698–760; that stretch reads DRKHEIEAAI…REYLARTPED (63 aa). A Glycyl lysine isopeptide (Lys-Gly) (interchain with G-Cter in NEDD8) cross-link involves residue Lys712.

It belongs to the cullin family. In terms of assembly, component of multiple BCR (BTB-CUL3-RBX1) E3 ubiquitin-protein ligase complexes formed of cul3, rbx1 and a variable BTB domain-containing protein acting as both, adapter to cullin and substrate recognition subunit. Interacts with btbd6. Post-translationally, neddylated. Attachment of NEDD8 is required for the E3 ubiquitin-protein ligase activity of the SCF-like complex.

Its subcellular location is the nucleus. It participates in protein modification; protein ubiquitination. In terms of biological role, probable core component of cullin-based SCF-like E3 ubiquitin-protein ligase complexes which mediate the ubiquitination and subsequent proteasomal degradation of target proteins. The E3 ubiquitin-protein ligase activity of the complex is dependent on the neddylation of the cullin subunit. Involved in ER-Golgi transport by regulating the size of COPII coats, thereby playing a key role in collagen export, which is required for embryonic stem (ES) cells division. May play a role in the regulation of mittotic entry via ubiquitination of aurka. This Xenopus laevis (African clawed frog) protein is Cullin-3-A (cul3a).